Here is a 340-residue protein sequence, read N- to C-terminus: MANVLINGYGSIGKRVADAVAKQDDMKVIGVTKTKPDFEAKMAVEKGYKLFAAIPERKHLFEEAGIPVEGTLDDIIEDADIVVDGAPKKIGKANLENVYKKHGVKAIIQGGEKAGDAQDSFNSLWSYDRCYGKDYIRLVSCNTTGLCRSMYAINSVADILKARIVLIRRAADPNDIKTGPVNAIVPNPVTVPSHHGPDVVSVIPELDGKIMTSAVIVPTTLMHMHSIMVETSGTNRDEIIDALAKTPRILTVKASEGFDSTAKIIEYARDLGRSRYDLNEIAVWEESVNVVDNEVYMMQAIHQESDVIPENVDCIRAMLEMESDNLKSIEKTNKALGLIK.

Residues 11-12 and glycine 111 each bind NAD(+); that span reads SI. Residue 140–142 coordinates D-glyceraldehyde 3-phosphate; it reads SCN. Residue cysteine 141 is the Nucleophile of the active site. Position 169 (arginine 169) interacts with NAD(+). A D-glyceraldehyde 3-phosphate-binding site is contributed by 195-196; it reads HG. Residue glutamine 303 participates in NAD(+) binding.

This sequence belongs to the glyceraldehyde-3-phosphate dehydrogenase family. In terms of assembly, homotetramer.

The protein localises to the cytoplasm. It carries out the reaction D-glyceraldehyde 3-phosphate + phosphate + NADP(+) = (2R)-3-phospho-glyceroyl phosphate + NADPH + H(+). The enzyme catalyses D-glyceraldehyde 3-phosphate + phosphate + NAD(+) = (2R)-3-phospho-glyceroyl phosphate + NADH + H(+). The protein operates within carbohydrate degradation; glycolysis; pyruvate from D-glyceraldehyde 3-phosphate: step 1/5. The sequence is that of Glyceraldehyde-3-phosphate dehydrogenase from Methanococcus maripaludis (strain DSM 14266 / JCM 13030 / NBRC 101832 / S2 / LL).